We begin with the raw amino-acid sequence, 83 residues long: Non-muscle caldesmon (83 aa).

2 stretches are compositionally biased toward basic and acidic residues: residues 1–44 and 62–76; these read QTSE…KEEK and NQLK…KESK. The interval 1–63 is myosin and calmodulin-binding; sequence QTSEKEGRSE…PKPGSIEENQ (63 aa). The interval 1 to 83 is disordered; the sequence is QTSEKEGRSE…ESKNILSLCL (83 aa).

In non-muscle cells, phosphorylation by CDC2 during mitosis causes caldesmon to dissociate from microfilaments. Phosphorylation reduces caldesmon binding to actin, myosin, and calmodulin as well as its inhibition of actomyosin ATPase activity. Phosphorylation also occurs in both quiescent and dividing smooth muscle cells with similar effects on the interaction with actin and calmodulin and on microfilaments reorganization.

The protein localises to the cytoplasm. It localises to the cytoskeleton. Its subcellular location is the myofibril. It is found in the stress fiber. Functionally, actin- and myosin-binding protein implicated in the regulation of actomyosin interactions in smooth muscle and nonmuscle cells (could act as a bridge between myosin and actin filaments). Stimulates actin binding of tropomyosin which increases the stabilization of actin filament structure. In muscle tissues, inhibits the actomyosin ATPase by binding to F-actin. This inhibition is attenuated by calcium-calmodulin and is potentiated by tropomyosin. Interacts with actin, myosin, two molecules of tropomyosin and with calmodulin. Also plays an essential role during cellular mitosis and receptor capping. The sequence is that of Non-muscle caldesmon (CALD1) from Bos taurus (Bovine).